A 252-amino-acid chain; its full sequence is Small ribosomal subunit protein uS2 (252 aa).

The tract at residues serine 231–alanine 252 is disordered. Over residues glutamine 239 to alanine 252 the composition is skewed to acidic residues.

Belongs to the universal ribosomal protein uS2 family.

The sequence is that of Small ribosomal subunit protein uS2 from Acetivibrio thermocellus (strain ATCC 27405 / DSM 1237 / JCM 9322 / NBRC 103400 / NCIMB 10682 / NRRL B-4536 / VPI 7372) (Clostridium thermocellum).